The sequence spans 90 residues: Small ribosomal subunit protein uS15 (90 aa).

Belongs to the universal ribosomal protein uS15 family. In terms of assembly, part of the 30S ribosomal subunit. Forms a bridge to the 50S subunit in the 70S ribosome, contacting the 23S rRNA.

In terms of biological role, one of the primary rRNA binding proteins, it binds directly to 16S rRNA where it helps nucleate assembly of the platform of the 30S subunit by binding and bridging several RNA helices of the 16S rRNA. Forms an intersubunit bridge (bridge B4) with the 23S rRNA of the 50S subunit in the ribosome. This chain is Small ribosomal subunit protein uS15, found in Helicobacter pylori (strain HPAG1).